Consider the following 161-residue polypeptide: SsrA-binding protein (161 aa).

Residues 140–161 (KRESIKERDWKRDKQRLLKDRG) form a disordered region.

This sequence belongs to the SmpB family.

Its subcellular location is the cytoplasm. Its function is as follows. Required for rescue of stalled ribosomes mediated by trans-translation. Binds to transfer-messenger RNA (tmRNA), required for stable association of tmRNA with ribosomes. tmRNA and SmpB together mimic tRNA shape, replacing the anticodon stem-loop with SmpB. tmRNA is encoded by the ssrA gene; the 2 termini fold to resemble tRNA(Ala) and it encodes a 'tag peptide', a short internal open reading frame. During trans-translation Ala-aminoacylated tmRNA acts like a tRNA, entering the A-site of stalled ribosomes, displacing the stalled mRNA. The ribosome then switches to translate the ORF on the tmRNA; the nascent peptide is terminated with the 'tag peptide' encoded by the tmRNA and targeted for degradation. The ribosome is freed to recommence translation, which seems to be the essential function of trans-translation. The polypeptide is SsrA-binding protein (Sphingopyxis alaskensis (strain DSM 13593 / LMG 18877 / RB2256) (Sphingomonas alaskensis)).